Consider the following 175-residue polypeptide: Nucleoside triphosphate/diphosphate phosphatase (175 aa).

The Proton donor role is filled by arginine 23. Positions 87, 103, 105, 107, 120, and 123 each coordinate Mg(2+).

This sequence belongs to the Ntdp family. It depends on Mg(2+) as a cofactor.

It catalyses the reaction a ribonucleoside 5'-triphosphate + H2O = a ribonucleoside 5'-diphosphate + phosphate + H(+). The enzyme catalyses a ribonucleoside 5'-diphosphate + H2O = a ribonucleoside 5'-phosphate + phosphate + H(+). Its function is as follows. Has nucleoside phosphatase activity towards nucleoside triphosphates and nucleoside diphosphates. The protein is Nucleoside triphosphate/diphosphate phosphatase of Listeria innocua serovar 6a (strain ATCC BAA-680 / CLIP 11262).